The following is a 319-amino-acid chain: Carboxylesterase NlhH (319 aa).

The Involved in the stabilization of the negatively charged intermediate by the formation of the oxyanion hole signature appears at 88-90; that stretch reads HGG. Residues Ser162, Asp260, and His290 contribute to the active site.

This sequence belongs to the 'GDXG' lipolytic enzyme family. Monomer.

The enzyme catalyses a carboxylic ester + H2O = an alcohol + a carboxylate + H(+). Functionally, hydrolyzes various short-chain esters. The polypeptide is Carboxylesterase NlhH (nlhH) (Mycobacterium tuberculosis (strain CDC 1551 / Oshkosh)).